The sequence spans 140 residues: Putative 6-pyruvoyl tetrahydrobiopterin synthase (140 aa).

His19 serves as a coordination point for Zn(2+). Residue Cys38 is the Proton acceptor of the active site. Zn(2+) contacts are provided by His44 and His46. Catalysis depends on charge relay system residues His84 and Glu129.

It belongs to the PTPS family. In terms of assembly, homohexamer formed of two homotrimers in a head to head fashion. Zn(2+) serves as cofactor.

It carries out the reaction 7,8-dihydroneopterin 3'-triphosphate = 6-pyruvoyl-5,6,7,8-tetrahydropterin + triphosphate + H(+). The protein operates within cofactor biosynthesis; tetrahydrobiopterin biosynthesis; tetrahydrobiopterin from 7,8-dihydroneopterin triphosphate: step 1/3. Functionally, involved in the biosynthesis of tetrahydrobiopterin, an essential cofactor of aromatic amino acid hydroxylases. Catalyzes the transformation of 7,8-dihydroneopterin triphosphate into 6-pyruvoyl tetrahydropterin. The chain is Putative 6-pyruvoyl tetrahydrobiopterin synthase (ptps-1) from Caenorhabditis elegans.